The chain runs to 271 residues: Formamidopyrimidine-DNA glycosylase (271 aa).

The Schiff-base intermediate with DNA role is filled by Pro2. The active-site Proton donor is the Glu3. The active-site Proton donor; for beta-elimination activity is Lys58. Residues His91, Arg110, and Arg152 each coordinate DNA. The segment at 237–271 (LVYGREGQPCVHCGRPIRCETIGQRSSYFCTRCQR) adopts an FPG-type zinc-finger fold. Arg261 functions as the Proton donor; for delta-elimination activity in the catalytic mechanism.

The protein belongs to the FPG family. In terms of assembly, monomer. Zn(2+) serves as cofactor.

The enzyme catalyses Hydrolysis of DNA containing ring-opened 7-methylguanine residues, releasing 2,6-diamino-4-hydroxy-5-(N-methyl)formamidopyrimidine.. It carries out the reaction 2'-deoxyribonucleotide-(2'-deoxyribose 5'-phosphate)-2'-deoxyribonucleotide-DNA = a 3'-end 2'-deoxyribonucleotide-(2,3-dehydro-2,3-deoxyribose 5'-phosphate)-DNA + a 5'-end 5'-phospho-2'-deoxyribonucleoside-DNA + H(+). Its function is as follows. Involved in base excision repair of DNA damaged by oxidation or by mutagenic agents. Acts as a DNA glycosylase that recognizes and removes damaged bases. Has a preference for oxidized purines, such as 7,8-dihydro-8-oxoguanine (8-oxoG). Has AP (apurinic/apyrimidinic) lyase activity and introduces nicks in the DNA strand. Cleaves the DNA backbone by beta-delta elimination to generate a single-strand break at the site of the removed base with both 3'- and 5'-phosphates. The chain is Formamidopyrimidine-DNA glycosylase from Syntrophotalea carbinolica (strain DSM 2380 / NBRC 103641 / GraBd1) (Pelobacter carbinolicus).